The primary structure comprises 194 residues: MMINIQEDKLVSAHDAEEILRFFNCHDSALQQEATTLLTQEAHLLDIQAYRAWLEHCVGSEVQYQVISRELRAASERRYKLNEAMNVYNENFQQLKVRVEHQLDPQNWGNSPKLRFTRFITNVQAAMDVNDKELLHIRSNVILHRARRGNQVDVFYAAREDKWKRGEGGVRKLVQRFVDYPERILQTHNLMVFL.

It belongs to the bacterial ring-hydroxylating dioxygenase beta subunit family. The naphthalene dioxygenase (NDO) multicomponent enzyme system is composed of an electron transfer component and a dioxygenase component (iron sulfur protein (ISP)). The electron transfer component is composed of a ferredoxin reductase (NdoR) and a ferredoxin (NdoA), and the dioxygenase component is formed of a heterohexamer (trimer of heterodimers) of three large alpha subunits (NdoB) and three small beta subunits (NdoC).

It participates in aromatic compound metabolism; naphthalene degradation. In terms of biological role, component of the naphthalene dioxygenase (NDO) multicomponent enzyme system which catalyzes the incorporation of both atoms of molecular oxygen into naphthalene to form cis-(1R,2S)-dihydroxy-1,2-dihydronaphthalene. The beta subunit seems to have a structural role in the holoenzyme. Also able to catalyze the cis-dihydroxylation of biphenyl and phenanthrene. This Pseudomonas putida (Arthrobacter siderocapsulatus) protein is Naphthalene 1,2-dioxygenase system, small oxygenase component.